A 674-amino-acid chain; its full sequence is Metal-nicotianamine transporter YSL2 (674 aa).

The segment at 1-29 (MEAAAPEIERCDAGDVESDHDGAAAAAER) is disordered. Basic and acidic residues predominate over residues 7 to 22 (EIERCDAGDVESDHDG). Helical transmembrane passes span 41–61 (GMVA…KLAL), 64–84 (GIIP…LRGW), 118–138 (CAVA…LLAL), 162–182 (GVGW…LNLL), 224–244 (GFLN…FYTG), 283–303 (LVNL…WPLI), 329–349 (FMCV…VTGI), 392–412 (LAYA…PIMF), 420–440 (VVVA…GTGL), 452–472 (IALF…AGLV), 506–526 (VGQA…FLLF), 559–579 (SALP…SVLI), 604–624 (FLVG…VFAW), and 633–653 (ALLV…WMFP).

It belongs to the YSL (TC 2.A.67.2) family. As to expression, expressed in phloem cells of vascular bundles in leaves and leaf sheaths. Expressed at low levels in phloem companion cells in the central cylinder of roots, but not in the epidermal or cortical cells.

The protein localises to the cell membrane. Its function is as follows. Involved in the phloem transport of iron and manganese and their translocation into the grain. Transports iron- and manganese-nicotianamine chelates, but not iron-phytosiderophore. The chain is Metal-nicotianamine transporter YSL2 (YSL2) from Oryza sativa subsp. japonica (Rice).